We begin with the raw amino-acid sequence, 161 residues long: Putative pre-16S rRNA nuclease (161 aa).

Belongs to the YqgF nuclease family.

Its subcellular location is the cytoplasm. Its function is as follows. Could be a nuclease involved in processing of the 5'-end of pre-16S rRNA. This is Putative pre-16S rRNA nuclease from Bradyrhizobium diazoefficiens (strain JCM 10833 / BCRC 13528 / IAM 13628 / NBRC 14792 / USDA 110).